Here is a 287-residue protein sequence, read N- to C-terminus: Intermediate filament family orphan 2 (287 aa).

In terms of domain architecture, IF rod spans 1-254 (MNLQTMVDTL…RLIKGSADRN (254 aa)). Residues 248–287 (KGSADRNSPSPSSVASSDSGSTDEIQDDLEREADVEPMVS) form a disordered region. Residues 255 to 267 (SPSPSSVASSDSG) are compositionally biased toward low complexity. Acidic residues predominate over residues 271 to 287 (EIQDDLEREADVEPMVS).

The protein belongs to the intermediate filament family.

The polypeptide is Intermediate filament family orphan 2 (Iffo2) (Rattus norvegicus (Rat)).